The chain runs to 211 residues: Protein 33K (211 aa).

Disordered regions lie at residues 1–95 (MPPK…PCSL) and 107–140 (AGSP…QDSP). Over residues 24 to 65 (DEEETWDDSQAEEVSDEEAEEQMESWDSLDEEDLEDVEEETI) the composition is skewed to acidic residues. A compositionally biased stretch (pro residues) spans 83–92 (KTIPPLPPQP). The segment covering 129-140 (TSSAIATRQDSP) has biased composition (polar residues). The interval 154–181 (YAIFQQSRGQQLELKVKNRSLRSLTRSC) is necessary for nuclear subcellular location. Positions 160-180 (SRGQQLELKVKNRSLRSLTRS) are RS-repeat; required for splicing enhancer activity.

It belongs to the adenoviridae splicing factor family. As to quaternary structure, homooligomer. Interacts with DBP; this interaction occurs at a unique vertex during genome packaging. Interacts with IVa2; this interaction occurs at a unique vertex during genome packaging and seems to potentiate IVa2 and 33K oligomerization. Phosphorylated in vitro by human PKA and PRKDC. PRKDC inhibits, whereas PKA activates the splicing factor.

Its subcellular location is the host nucleus. Functionally, promotes alternative splicing of late transcripts by promoting splicing at weak 3' splice sites. Required for the temporal activation of major late pre-mRNA splicing at late times of infection. Induces the splicing and expression of the late capsid vertex protein. Probably functions as the small terminase that is part of the molecular motor that translocates genomic DNA in empty capsid during DNA packaging. This motor is located at a unique vertex and comprises at least the IVa2 ATPase, the small terminase 33K and probably a portal. Forms a ring-like structure of about 17 nm in which genomic DNA is translocated into the capsid. Stimulates IVa2 ATPase activity in the presence of the viral genome. Once the DNA is packaged, the terminase detaches: the 33K protein is present in the empty particles, but not in the mature virions. Also involved in virion assembly. This is Protein 33K from Human adenovirus F serotype 40 (HAdV-40).